The following is a 333-amino-acid chain: tRNA N6-adenosine threonylcarbamoyltransferase (333 aa).

Fe cation-binding residues include His-111 and His-115. Substrate contacts are provided by residues 134–138 (LASGG), Asp-167, Gly-180, and Asn-273. Asp-301 provides a ligand contact to Fe cation.

The protein belongs to the KAE1 / TsaD family. The cofactor is Fe(2+).

The protein localises to the cytoplasm. The enzyme catalyses L-threonylcarbamoyladenylate + adenosine(37) in tRNA = N(6)-L-threonylcarbamoyladenosine(37) in tRNA + AMP + H(+). Required for the formation of a threonylcarbamoyl group on adenosine at position 37 (t(6)A37) in tRNAs that read codons beginning with adenine. Is involved in the transfer of the threonylcarbamoyl moiety of threonylcarbamoyl-AMP (TC-AMP) to the N6 group of A37, together with TsaE and TsaB. TsaD likely plays a direct catalytic role in this reaction. In Desulforapulum autotrophicum (strain ATCC 43914 / DSM 3382 / VKM B-1955 / HRM2) (Desulfobacterium autotrophicum), this protein is tRNA N6-adenosine threonylcarbamoyltransferase.